A 379-amino-acid chain; its full sequence is Demethylspheroidene O-methyltransferase (379 aa).

S-adenosyl-L-methionine is bound by residues Asp235 and Arg279.

It belongs to the class I-like SAM-binding methyltransferase superfamily. Cation-independent O-methyltransferase family.

The enzyme catalyses demethylspheroidene + S-adenosyl-L-methionine = spheroidene + S-adenosyl-L-homocysteine + H(+). It participates in carotenoid biosynthesis; spheroidene biosynthesis. In terms of biological role, methyltransferase that mediates the O-methylation of 1-hydroxy carotenoids. Converts hydroxyneurosporene to methoxyneurosporene or demethylspheroidene to spheroidene. Also able to produce spirilloxanthin. This Cereibacter sphaeroides (strain ATCC 17023 / DSM 158 / JCM 6121 / CCUG 31486 / LMG 2827 / NBRC 12203 / NCIMB 8253 / ATH 2.4.1.) (Rhodobacter sphaeroides) protein is Demethylspheroidene O-methyltransferase (crtF).